A 367-amino-acid chain; its full sequence is Adenosine deaminase (367 aa).

Zn(2+) is bound by residues H46 and H48. A purine D-ribonucleoside contacts are provided by residues 48-50 (HLD), D176, and G205. The segment at 174–188 (TGDGGLSHERMKEAA) is gating helix loop; regulates binding affinity for substrates and thus substrate selectivity. H230 is a binding site for Zn(2+). Residues E233, H257, and D314 each contribute to the a purine D-ribonucleoside site. D314 is a Zn(2+) binding site.

It belongs to the metallo-dependent hydrolases superfamily. Adenosine and AMP deaminases family. Zn(2+) serves as cofactor.

The enzyme catalyses adenosine + H2O + H(+) = inosine + NH4(+). It carries out the reaction S-methyl-5'-thioadenosine + H2O + H(+) = S-methyl-5'-thioinosine + NH4(+). The protein operates within purine metabolism; purine nucleoside salvage. Its activity is regulated as follows. Inhibited by coformycin and methylthiocoformycin (MT-coformycin). Functionally, catalyzes the hydrolytic deamination of adenosine to produce inosine. Unlike mammalian adenosine deaminases, also catalyzes the deamination of 5'-methylthioadenosine (MTA), a by-product of polyamine biosynthesis, to produce 5'-methylthioinosine (MTI). Plays an essential role in the purine salvage pathway which allows the parasite to use host cell purines for the synthesis of nucleic acids. This is Adenosine deaminase from Plasmodium falciparum (isolate 3D7).